The chain runs to 442 residues: Choline monooxygenase, chloroplastic (442 aa).

The N-terminal 58 residues, 1 to 58, are a transit peptide targeting the chloroplast; that stretch reads MASSASMLINYPTTFCGVRNSSNPNNDQFSDQINIPSSLNNNINISKITSKTNKIIPK. Residues 123–229 form the Rieske domain; that stretch reads WQVAGYSDQI…VAIWGPFVLI (107 aa). Residues cysteine 165, histidine 167, cysteine 184, and histidine 187 each contribute to the [2Fe-2S] cluster site. Fe cation is bound by residues histidine 290 and histidine 295.

This sequence belongs to the choline monooxygenase family. Requires [2Fe-2S] cluster as cofactor. Fe cation is required as a cofactor. The cofactor is Mg(2+).

The protein localises to the plastid. Its subcellular location is the chloroplast stroma. It carries out the reaction choline + 2 reduced [2Fe-2S]-[ferredoxin] + O2 + 2 H(+) = betaine aldehyde hydrate + 2 oxidized [2Fe-2S]-[ferredoxin] + H2O. The protein operates within amine and polyamine biosynthesis; betaine biosynthesis via choline pathway; betaine aldehyde from choline (monooxygenase route): step 1/1. In terms of biological role, catalyzes the first step of the osmoprotectant glycine betaine synthesis. In Amaranthus tricolor (Joseph's coat), this protein is Choline monooxygenase, chloroplastic (CMO).